The primary structure comprises 297 residues: D-alanine--D-alanine ligase (297 aa).

In terms of domain architecture, ATP-grasp spans 103–293 (KEILMHHRMP…FDSFVKSILE (191 aa)). An ATP-binding site is contributed by 129–180 (ISFPVAVKPSSGGSSIATFKVKSLEELENAYQQASKHGEVMIEQWVTGKEIT). Mg(2+) contacts are provided by Asp247, Glu260, and Asn262.

The protein belongs to the D-alanine--D-alanine ligase family. It depends on Mg(2+) as a cofactor. Mn(2+) is required as a cofactor.

It localises to the cytoplasm. The catalysed reaction is 2 D-alanine + ATP = D-alanyl-D-alanine + ADP + phosphate + H(+). Its pathway is cell wall biogenesis; peptidoglycan biosynthesis. Cell wall formation. This chain is D-alanine--D-alanine ligase, found in Francisella philomiragia subsp. philomiragia (strain ATCC 25017 / CCUG 19701 / FSC 153 / O#319-036).